A 469-amino-acid chain; its full sequence is Glutamate--tRNA ligase (469 aa).

Residues 9-19 (PSPTGFLHVGG) carry the 'HIGH' region motif. Positions 236–240 (KLSKR) match the 'KMSKS' region motif. Lys239 lines the ATP pocket.

It belongs to the class-I aminoacyl-tRNA synthetase family. Glutamate--tRNA ligase type 1 subfamily. In terms of assembly, monomer.

The protein localises to the cytoplasm. It carries out the reaction tRNA(Glu) + L-glutamate + ATP = L-glutamyl-tRNA(Glu) + AMP + diphosphate. Catalyzes the attachment of glutamate to tRNA(Glu) in a two-step reaction: glutamate is first activated by ATP to form Glu-AMP and then transferred to the acceptor end of tRNA(Glu). The sequence is that of Glutamate--tRNA ligase from Shewanella frigidimarina (strain NCIMB 400).